The following is a 258-amino-acid chain: 5'-nucleotidase SurE (258 aa).

A divalent metal cation contacts are provided by Asp-10, Asp-11, Ser-41, and Asn-96.

It belongs to the SurE nucleotidase family. The cofactor is a divalent metal cation.

The protein resides in the cytoplasm. The catalysed reaction is a ribonucleoside 5'-phosphate + H2O = a ribonucleoside + phosphate. In terms of biological role, nucleotidase that shows phosphatase activity on nucleoside 5'-monophosphates. The chain is 5'-nucleotidase SurE from Sorangium cellulosum (strain So ce56) (Polyangium cellulosum (strain So ce56)).